Reading from the N-terminus, the 217-residue chain is Protein canopy 4 (217 aa).

An N-terminal signal peptide occupies residues 1 to 27 (MEMFTVFLFYMFSLVLANQEERLPNKC). Intrachain disulfides connect C27-C185, C30-C173, and C83-C145. The disordered stretch occupies residues 194-217 (MGMKGSEEESEGKDGKETHDAGEL). Basic and acidic residues predominate over residues 205–217 (GKDGKETHDAGEL).

It belongs to the canopy family.

The protein localises to the secreted. In Danio rerio (Zebrafish), this protein is Protein canopy 4 (cnpy4).